The primary structure comprises 556 residues: Copine-7 (556 aa).

C2 domains lie at 1 to 128 and 135 to 262; these read MSGD…TRPL and NAGK…AQWD. Ca(2+)-binding residues include Asp-168, Asp-174, Asp-230, Asp-232, and Asp-238. The VWFA domain maps to 305–504; it reads HCTVAIDFTA…PALRDIVQFV (200 aa). Positions 536–556 are disordered; sequence KDLPPRSLGGQTGEAGPSSAP.

It belongs to the copine family. It depends on Ca(2+) as a cofactor.

The protein localises to the cytoplasm. Its subcellular location is the nucleus. The protein resides in the cell membrane. Calcium-dependent phospholipid-binding protein that may play a role in calcium-mediated intracellular processes. The sequence is that of Copine-7 from Rattus norvegicus (Rat).